Reading from the N-terminus, the 242-residue chain is Lactate utilization protein A 2 (242 aa).

Belongs to the LutA/YkgE family.

In terms of biological role, is involved in L-lactate degradation and allows cells to grow with lactate as the sole carbon source. The sequence is that of Lactate utilization protein A 2 from Bacillus cereus (strain AH820).